The primary structure comprises 310 residues: Oxygen-dependent coproporphyrinogen-III oxidase (310 aa).

Residue Ser-97 participates in substrate binding. A divalent metal cation is bound by residues His-101 and His-111. His-111 functions as the Proton donor in the catalytic mechanism. 113 to 115 (NFR) provides a ligand contact to substrate. A divalent metal cation is bound by residues His-150 and His-180. An important for dimerization region spans residues 245–280 (YVEFNLLYDRGTRFGLEFGGRTESILMSLPPRVVWR). A substrate-binding site is contributed by 263 to 265 (GGR).

This sequence belongs to the aerobic coproporphyrinogen-III oxidase family. As to quaternary structure, homodimer. A divalent metal cation is required as a cofactor.

The protein localises to the cytoplasm. It catalyses the reaction coproporphyrinogen III + O2 + 2 H(+) = protoporphyrinogen IX + 2 CO2 + 2 H2O. It participates in porphyrin-containing compound metabolism; protoporphyrin-IX biosynthesis; protoporphyrinogen-IX from coproporphyrinogen-III (O2 route): step 1/1. Functionally, involved in the heme biosynthesis. Catalyzes the aerobic oxidative decarboxylation of propionate groups of rings A and B of coproporphyrinogen-III to yield the vinyl groups in protoporphyrinogen-IX. The sequence is that of Oxygen-dependent coproporphyrinogen-III oxidase from Coxiella burnetii (strain RSA 493 / Nine Mile phase I).